We begin with the raw amino-acid sequence, 134 residues long: Putative integral membrane protein YxzK (134 aa).

Transmembrane regions (helical) follow at residues 3-23 (VIRIILQVLILYVFFMIGEAI), 35-55 (IVGLVLLLICLGLRIVPVSII), 58-78 (GAGFLLSFLPLLFIPAMTGVI), and 89-109 (LMLLITVVLSTIVTIIAAGFA).

The protein localises to the cell membrane. The chain is Putative integral membrane protein YxzK (yxzK) from Bacillus subtilis (strain 168).